The following is a 376-amino-acid chain: N-acetyldiaminopimelate deacetylase (376 aa).

Asp69 is an active-site residue. The Proton acceptor role is filled by Glu128.

Belongs to the peptidase M20A family. N-acetyldiaminopimelate deacetylase subfamily.

The enzyme catalyses N-acetyl-(2S,6S)-2,6-diaminopimelate + H2O = (2S,6S)-2,6-diaminopimelate + acetate. It functions in the pathway amino-acid biosynthesis; L-lysine biosynthesis via DAP pathway; LL-2,6-diaminopimelate from (S)-tetrahydrodipicolinate (acetylase route): step 3/3. Functionally, catalyzes the conversion of N-acetyl-diaminopimelate to diaminopimelate and acetate. This chain is N-acetyldiaminopimelate deacetylase, found in Streptococcus pneumoniae (strain JJA).